A 1337-amino-acid chain; its full sequence is Activated Cdc42 kinase-like (1337 aa).

Ser-71 bears the Phosphoserine mark. Positions 133–399 (ISVNKQLGTG…GEIYDQLPDM (267 aa)) constitute a Protein kinase domain. ATP-binding positions include 139–147 (LGTGEFGIV) and Lys-164. Asp-260 serves as the catalytic Proton acceptor. Phosphotyrosine occurs at positions 291 and 292. Residues 399 to 460 (MKPEQLKAVV…NPSNTVAFLE (62 aa)) form the SH3 domain. One can recognise a CRIB domain in the interval 488–502 (ISKPQNDFKHTGHVG). The disordered stretch occupies residues 714 to 739 (SGDTNGNKHGHGLLPTLSKKKSSGTV). Residues Ser-764 and Ser-778 each carry the phosphoserine modification. A disordered region spans residues 786–822 (RFPHLSNNGSGDKSGGLGTSGSAHTPTHGNASPFPKK). Residues 805-815 (SGSAHTPTHGN) show a composition bias toward polar residues. Phosphoserine is present on residues Ser-831, Ser-918, and Ser-924. 2 disordered regions span residues 906-969 (AGLS…TSTK) and 1024-1045 (PSGM…PTVG). Positions 947–957 (PESPNPIPLPP) are enriched in pro residues.

Belongs to the protein kinase superfamily. Tyr protein kinase family.

The catalysed reaction is L-tyrosyl-[protein] + ATP = O-phospho-L-tyrosyl-[protein] + ADP + H(+). Functionally, likely to act as a downstream effector of Cdc42 during dorsal closure, acting in a kinase independent manner with the other ACK family member Ack to positively regulate expression of the myosin zip by promoting the endocytosis of Egfr in the amnioserosa (AS). The protein is Activated Cdc42 kinase-like of Drosophila melanogaster (Fruit fly).